Consider the following 430-residue polypeptide: 3-phosphoshikimate 1-carboxyvinyltransferase (430 aa).

The segment at 1-20 (MHATVSPSRVRGRARAPPSK) is disordered. 3-phosphoshikimate is bound by residues Lys20, Ser21, and Arg25. A phosphoenolpyruvate-binding site is contributed by Lys20. Gly91 and Arg119 together coordinate phosphoenolpyruvate. 3-phosphoshikimate contacts are provided by Ser164, Ser165, Gln166, Ser192, Asp312, and Lys339. A phosphoenolpyruvate-binding site is contributed by Gln166. Asp312 serves as the catalytic Proton acceptor. Residues Arg343 and Arg386 each contribute to the phosphoenolpyruvate site.

This sequence belongs to the EPSP synthase family. In terms of assembly, monomer.

It is found in the cytoplasm. It catalyses the reaction 3-phosphoshikimate + phosphoenolpyruvate = 5-O-(1-carboxyvinyl)-3-phosphoshikimate + phosphate. The protein operates within metabolic intermediate biosynthesis; chorismate biosynthesis. Catalyzes the transfer of the enolpyruvyl moiety of phosphoenolpyruvate (PEP) to the 5-hydroxyl of shikimate-3-phosphate (S3P) to produce enolpyruvyl shikimate-3-phosphate and inorganic phosphate. The polypeptide is 3-phosphoshikimate 1-carboxyvinyltransferase (Halobacterium salinarum (strain ATCC 29341 / DSM 671 / R1)).